Here is a 259-residue protein sequence, read N- to C-terminus: Glutamate 5-kinase (259 aa).

Residue Lys18 participates in ATP binding. Residues Ser54, Asp141, and Asn153 each coordinate substrate. Residue 173-174 coordinates ATP; sequence SD.

This sequence belongs to the glutamate 5-kinase family.

The protein resides in the cytoplasm. The enzyme catalyses L-glutamate + ATP = L-glutamyl 5-phosphate + ADP. The protein operates within amino-acid biosynthesis; L-proline biosynthesis; L-glutamate 5-semialdehyde from L-glutamate: step 1/2. Its function is as follows. Catalyzes the transfer of a phosphate group to glutamate to form L-glutamate 5-phosphate. The polypeptide is Glutamate 5-kinase (Clavibacter michiganensis subsp. michiganensis (strain NCPPB 382)).